Here is a 310-residue protein sequence, read N- to C-terminus: Ribosomal protein uL3 glutamine methyltransferase (310 aa).

It belongs to the protein N5-glutamine methyltransferase family. PrmB subfamily.

The catalysed reaction is L-glutaminyl-[ribosomal protein uL3] + S-adenosyl-L-methionine = N(5)-methyl-L-glutaminyl-[ribosomal protein uL3] + S-adenosyl-L-homocysteine + H(+). Functionally, methylates large ribosomal subunit protein uL3 on a specific glutamine residue. The sequence is that of Ribosomal protein uL3 glutamine methyltransferase from Aliivibrio fischeri (strain ATCC 700601 / ES114) (Vibrio fischeri).